The following is a 227-amino-acid chain: Cytochrome c oxidase subunit 2 (227 aa).

Topologically, residues 1-22 are mitochondrial intermembrane; it reads MAYPFQLGLQDATSPIMEELMN. The chain crosses the membrane as a helical span at residues 23-44; that stretch reads FHDHTLMIVFLISSLVLYIISL. Topologically, residues 45–60 are mitochondrial matrix; the sequence is MLTTKLTHTSTMDAQE. The chain crosses the membrane as a helical span at residues 61-81; that stretch reads VETIWTILPAVILIMIALPSL. Over 82-227 the chain is Mitochondrial intermembrane; that stretch reads RILYMMDEIN…YFENWSASMI (146 aa). Positions 161, 196, 198, 200, 204, and 207 each coordinate Cu cation. A Mg(2+)-binding site is contributed by Glu198. At Tyr218 the chain carries Phosphotyrosine.

Belongs to the cytochrome c oxidase subunit 2 family. As to quaternary structure, component of the cytochrome c oxidase (complex IV, CIV), a multisubunit enzyme composed of 14 subunits. The complex is composed of a catalytic core of 3 subunits MT-CO1, MT-CO2 and MT-CO3, encoded in the mitochondrial DNA, and 11 supernumerary subunits COX4I, COX5A, COX5B, COX6A, COX6B, COX6C, COX7A, COX7B, COX7C, COX8 and NDUFA4, which are encoded in the nuclear genome. The complex exists as a monomer or a dimer and forms supercomplexes (SCs) in the inner mitochondrial membrane with NADH-ubiquinone oxidoreductase (complex I, CI) and ubiquinol-cytochrome c oxidoreductase (cytochrome b-c1 complex, complex III, CIII), resulting in different assemblies (supercomplex SCI(1)III(2)IV(1) and megacomplex MCI(2)III(2)IV(2)). Found in a complex with TMEM177, COA6, COX18, COX20, SCO1 and SCO2. Interacts with TMEM177 in a COX20-dependent manner. Interacts with COX20. Interacts with COX16. Cu cation serves as cofactor.

The protein localises to the mitochondrion inner membrane. It carries out the reaction 4 Fe(II)-[cytochrome c] + O2 + 8 H(+)(in) = 4 Fe(III)-[cytochrome c] + 2 H2O + 4 H(+)(out). Functionally, component of the cytochrome c oxidase, the last enzyme in the mitochondrial electron transport chain which drives oxidative phosphorylation. The respiratory chain contains 3 multisubunit complexes succinate dehydrogenase (complex II, CII), ubiquinol-cytochrome c oxidoreductase (cytochrome b-c1 complex, complex III, CIII) and cytochrome c oxidase (complex IV, CIV), that cooperate to transfer electrons derived from NADH and succinate to molecular oxygen, creating an electrochemical gradient over the inner membrane that drives transmembrane transport and the ATP synthase. Cytochrome c oxidase is the component of the respiratory chain that catalyzes the reduction of oxygen to water. Electrons originating from reduced cytochrome c in the intermembrane space (IMS) are transferred via the dinuclear copper A center (CU(A)) of subunit 2 and heme A of subunit 1 to the active site in subunit 1, a binuclear center (BNC) formed by heme A3 and copper B (CU(B)). The BNC reduces molecular oxygen to 2 water molecules using 4 electrons from cytochrome c in the IMS and 4 protons from the mitochondrial matrix. The chain is Cytochrome c oxidase subunit 2 (Mtco2) from Mus musculus (Mouse).